Consider the following 159-residue polypeptide: MQCPTCQNTDSRVLESRSADSGKSVRRRRECLNCSFRFTTYERVESMPVSVLKKDGSRELFDKQKLFTGISRACEKTNFSSEAIINFVDGIESQIVQDTNKDIKSSQIGELILKNLRKENEVAYIRYASVYRKFNGVKDFISTLESLKGSSKNQLASIS.

Residues 1–11 are compositionally biased toward polar residues; it reads MQCPTCQNTDS. Residues 1 to 21 are disordered; sequence MQCPTCQNTDSRVLESRSADS. A zinc finger lies at 3–34; it reads CPTCQNTDSRVLESRSADSGKSVRRRRECLNC. Residues 49-139 form the ATP-cone domain; that stretch reads VSVLKKDGSR…VYRKFNGVKD (91 aa).

The protein belongs to the NrdR family. The cofactor is Zn(2+).

In terms of biological role, negatively regulates transcription of bacterial ribonucleotide reductase nrd genes and operons by binding to NrdR-boxes. The chain is Transcriptional repressor NrdR from Prochlorococcus marinus (strain MIT 9301).